The primary structure comprises 282 residues: Ammonia transport outward protein 2 (282 aa).

A disordered region spans residues 1–34; the sequence is MSDREQSSGNTAFENPKALDSSEGEFISENNDQS. Serine 2 carries the N-acetylserine modification. Serine 2, serine 7, serine 21, serine 22, serine 28, and serine 40 each carry phosphoserine. Residues 2–86 lie on the Extracellular side of the membrane; that stretch reads SDREQSSGNT…GLAPAPVHKF (85 aa). Residues 87-107 form a helical membrane-spanning segment; the sequence is ANPAPLGLSGFALTTFVLSMF. Topologically, residues 108-119 are cytoplasmic; sequence NARAQGITIPNV. A helical membrane pass occupies residues 120 to 140; that stretch reads VVGCAMFYGGLVQLIAGIWEI. The Extracellular segment spans residues 141 to 150; the sequence is ALENTFGGTA. Residues 151–171 traverse the membrane as a helical segment; that stretch reads LCSFGGFWLSFGAIYIPWFGI. Residues 172–184 lie on the Cytoplasmic side of the membrane; that stretch reads LDAYKDKESDLGN. Residues 185 to 205 form a helical membrane-spanning segment; that stretch reads ALGFYLLGWALFTFGLSVCTM. Over 206-207 the chain is Extracellular; sequence KS. Residues 208–228 form a helical membrane-spanning segment; it reads TIMFFALFFLLAVTFLLLSIA. Topologically, residues 229 to 238 are cytoplasmic; that stretch reads NFTGEVGVTR. A helical transmembrane segment spans residues 239-259; that stretch reads AGGVLGVIVAFIAWYNAYAGI. At 260–282 the chain is on the extracellular side; that stretch reads ATRQNSYIMVHPFALPSNDKVFF.

It belongs to the acetate uptake transporter (AceTr) (TC 2.A.96) family.

It localises to the cell membrane. Transporter protein required for ammonia export. Involved in acetate resistance. The sequence is that of Ammonia transport outward protein 2 (ATO2) from Saccharomyces cerevisiae (strain ATCC 204508 / S288c) (Baker's yeast).